A 107-amino-acid chain; its full sequence is MQFSTTPTLEGQSIVEYCGVVTGEAILGANIFRDFFAGIRDIVGGRSGAYEKELRKAREIALQELGEQAKALGADAVVGIDIDYETVGKDGSMLMVSVSGTAVKTRR.

It belongs to the UPF0145 family.

The chain is UPF0145 protein YbjQ from Salmonella dublin (strain CT_02021853).